A 333-amino-acid chain; its full sequence is Adenosine deaminase (333 aa).

Zn(2+)-binding residues include His12 and His14. The substrate site is built by His14, Asp16, and Gly170. His197 serves as a coordination point for Zn(2+). Residue Glu200 is the Proton donor of the active site. Residue Asp278 participates in Zn(2+) binding. Asp279 serves as a coordination point for substrate.

Belongs to the metallo-dependent hydrolases superfamily. Adenosine and AMP deaminases family. Adenosine deaminase subfamily. Zn(2+) is required as a cofactor.

It carries out the reaction adenosine + H2O + H(+) = inosine + NH4(+). It catalyses the reaction 2'-deoxyadenosine + H2O + H(+) = 2'-deoxyinosine + NH4(+). Catalyzes the hydrolytic deamination of adenosine and 2-deoxyadenosine. The polypeptide is Adenosine deaminase (Salmonella gallinarum (strain 287/91 / NCTC 13346)).